A 343-amino-acid polypeptide reads, in one-letter code: 7-epi-alpha-eudesmol synthase ((2E,6E)-farnesyl diphosphate cyclizing) (343 aa).

Mg(2+)-binding residues include aspartate 80 and aspartate 84. The short motif at 80–84 (DDQFD) is the DDXXD motif element. Arginine 177 contributes to the substrate binding site. Mg(2+) contacts are provided by asparagine 223 and serine 227. Arginine 230 contacts substrate. A Mg(2+)-binding site is contributed by glutamate 231. 317-318 (RY) lines the substrate pocket.

Belongs to the terpene synthase family. The cofactor is Mg(2+).

The enzyme catalyses (2E,6E)-farnesyl diphosphate + H2O = 7-epi-alpha-eudesmol + diphosphate. It participates in secondary metabolite biosynthesis; terpenoid biosynthesis. Its function is as follows. Catalyzes the conversion of (2E,6E)-farnesyl diphosphate (FPP) to yield the bicyclic sesquiterpenol 7-epi-alpha-eudesmol via a 1,10-cyclization, which requires the abstraction of the pyrophosphate from FPP to yield the (E,E)-germacradienyl cation. The only accepted substrate is (2E,6E)-farnesyl diphosphate (FPP). This is 7-epi-alpha-eudesmol synthase ((2E,6E)-farnesyl diphosphate cyclizing) from Streptomyces viridochromogenes (strain DSM 40736 / JCM 4977 / BCRC 1201 / Tue 494).